Here is a 1778-residue protein sequence, read N- to C-terminus: Internalin I (1778 aa).

A signal peptide spans 1–28 (MKKKFSIVIISVLLLGYLAPFDTLLVGA). Residues 36–101 (DTAVKTAEAD…NIKTEINTDK (66 aa)) form a disordered region. A compositionally biased stretch (acidic residues) spans 51–62 (IESETGSDDETA). The segment covering 63-88 (EEPKEAKEAEASKETTEKEEKAKTEE) has biased composition (basic and acidic residues). 27 LRR repeats span residues 155-179 (AISQ…EGLQ), 183-204 (NLTS…KDLV), 205-227 (NLVS…EDLV), 228-250 (NLQE…ASLP), 251-272 (VLKE…NPAG), 277-298 (ELET…AKLP), 299-321 (KLKN…NGAT), 322-344 (KLQL…SGLS), 345-367 (ELEM…KNLP), 368-389 (NLVN…NNLP), 390-412 (KLQT…TDLP), 413-434 (QLKT…DNLP), 435-456 (KLEK…TDLP), 457-478 (RLSY…KKLP), 479-500 (LLEW…TNFP), 501-522 (SLNY…TELP), 523-544 (SLKE…HDMP), 545-566 (NLRK…DNLP), 567-588 (KLQS…HDLP), 589-610 (SLET…DNLP), 611-632 (DLTY…GDLP), 633-653 (NLET…GTMD), 657-678 (KLRI…GNLS), 685-707 (NLTE…STLS), 708-729 (RLIY…SNLT), 730-751 (NLQE…SDLE), and 752-773 (NLNK…ANMV). One can recognise an LRRCT domain in the interval 785-872 (TYTLPTVLSY…SAAKVTADAE (88 aa)). MucBP domains follow at residues 1510-1569 (DAAA…EQTV), 1575-1634 (AIKP…PQTI), and 1644-1705 (SKKS…SQTV). Positions 1716-1742 (SKDDPKVKGKTNQPSSTDTKLKVDNNS) are disordered. Polar residues predominate over residues 1725–1742 (KTNQPSSTDTKLKVDNNS). The short motif at 1743 to 1747 (LPATG) is the LPXTG sorting signal element. Position 1746 is a pentaglycyl murein peptidoglycan amidated threonine (Thr1746). Residues 1747–1778 (GDTENMILAVLIGFNMLIVASIFLFRKPKTNQ) constitute a propeptide, removed by sortase.

Belongs to the internalin family.

The protein resides in the secreted. Its subcellular location is the cell wall. A role in virulence could not be demonstrated. In Listeria monocytogenes serovar 1/2a (strain ATCC BAA-679 / EGD-e), this protein is Internalin I (inlI).